A 348-amino-acid polypeptide reads, in one-letter code: S-adenosyl-L-methionine-dependent methyl transferase PigF (348 aa).

Glutamate 199 lines the S-adenosyl-L-methionine pocket. The active-site Proton acceptor is the histidine 247.

The protein belongs to the class I-like SAM-binding methyltransferase superfamily. Cation-independent O-methyltransferase family.

It functions in the pathway antibiotic biosynthesis; prodigiosin biosynthesis. Its function is as follows. Involved in the biosynthesis of 4-methoxy-2,2'-bipyrrole-5-carbaldehyde (MBC), one of the terminal products involved in the biosynthesis of the red antibiotic prodigiosin (Pig). Catalyzes the transfer of a methyl group from S-adenosyl-L-methionine (SAM) to the hydroxyl group of 4-hydroxy-2,2'-bipyrrole-5-carbaldehyde (HBC) to yield 4-methoxy-2,2'-bipyrrole-5-carbaldehyde (MBC). This is S-adenosyl-L-methionine-dependent methyl transferase PigF from Serratia sp. (strain ATCC 39006) (Prodigiosinella confusarubida).